We begin with the raw amino-acid sequence, 446 residues long: MKLFGTSGIRMKNLDPLIAYKVGFAISKNFKKAVIGRDTRTTGNLIESAITAGLLNGGCDVTILGIVPTPVLGFSAKSHDIGIMITASHNPPEYNGIKLFNNNGTSFTPNQEESLEEIIEKSDFLDPSWDIVGNVSEDKTAVKKYLDYILSNINIKKKFNVVVDCANAAACGISPNLFTNAGCKVISVNSHCDGRFVGRMPEPNEKNLVETVDIVKGLNLSGRDFIGIAHDGDADRMIAIDEMGRVTDFDKLLAAFCKYVVQKTNAKKIVTTVDASMAIEEYLKEFGAEVIRTKIGDVSVAYEIEKTGAIFGGEPSGTWIHKSIHLTPDGILSGLRVLEMMEFYDKRLCEIMDEVPSYINLREKLPCPDELKNKVMKYVSKEGKLLFKKEPETLDGVRFSFENGWILIRPSGTESYIRVRVEAKDETFANELLNNGISLVNNGILK.

Serine 88 acts as the Phosphoserine intermediate in catalysis. Mg(2+) is bound by residues serine 88, aspartate 231, aspartate 233, and aspartate 235. Serine 88 bears the Phosphoserine mark.

Belongs to the phosphohexose mutase family. Mg(2+) serves as cofactor. Post-translationally, activated by phosphorylation.

It catalyses the reaction alpha-D-glucosamine 1-phosphate = D-glucosamine 6-phosphate. Its function is as follows. Catalyzes the conversion of glucosamine-6-phosphate to glucosamine-1-phosphate. The chain is Phosphoglucosamine mutase from Methanococcus vannielii (strain ATCC 35089 / DSM 1224 / JCM 13029 / OCM 148 / SB).